We begin with the raw amino-acid sequence, 32 residues long: MSDIN-like toxin proprotein 11 (32 aa).

The propeptide occupies 1 to 10 (MSDINATRLP). The disordered stretch occupies residues 1 to 32 (MSDINATRLPGMEPPSPMPCVGDADNFTLTRG). The cyclopeptide (Gly-Pro) cross-link spans 11–19 (GMEPPSPMP). Positions 20 to 32 (CVGDADNFTLTRG) are excised as a propeptide.

Belongs to the MSDIN fungal toxin family. Post-translationally, processed by the macrocyclase-peptidase enzyme POPB to yield a toxic cyclic nonapeptide. POPB first removes 10 residues from the N-terminus. Conformational trapping of the remaining peptide forces the enzyme to release this intermediate rather than proceed to macrocyclization. The enzyme rebinds the remaining peptide in a different conformation and catalyzes macrocyclization of the N-terminal 9 residues.

Probable toxin that belongs to the MSDIN-like toxin family responsible for a large number of food poisoning cases and deaths. The sequence is that of MSDIN-like toxin proprotein 11 from Amanita bisporigera (Destroying angel).